A 90-amino-acid polypeptide reads, in one-letter code: Albumin (90 aa).

Ser-5 is modified (phosphoserine). Ca(2+) contacts are provided by Glu-6 and Asp-13. The region spanning 25 to 90 (LLRHLVDEPQ…LVASTQAALA (66 aa)) is the Albumin domain. Residue Ser-61 is modified to Phosphoserine. Phosphothreonine is present on residues Thr-62 and Thr-64. Lys-80 is subject to N6-methyllysine.

The protein belongs to the ALB/AFP/VDB family. In terms of assembly, interacts with FCGRT; this interaction regulates ALB homeostasis. Interacts with TASOR. In plasma, occurs in a covalently-linked complex with chromophore-bound alpha-1-microglobulin; this interaction does not prevent fatty acid binding to ALB. Plasma.

Its subcellular location is the secreted. Its function is as follows. Binds water, Ca(2+), Na(+), K(+), fatty acids, hormones, bilirubin and drugs. Its main function is the regulation of the colloidal osmotic pressure of blood. Major zinc transporter in plasma, typically binds about 80% of all plasma zinc. Major calcium and magnesium transporter in plasma, binds approximately 45% of circulating calcium and magnesium in plasma. Potentially has more than two calcium-binding sites and might additionally bind calcium in a non-specific manner. The shared binding site between zinc and calcium suggests a crosstalk between zinc and calcium transport in the blood. The rank order of affinity is zinc &gt; calcium &gt; magnesium. Binds to the bacterial siderophore enterobactin and inhibits enterobactin-mediated iron uptake of E.coli from ferric transferrin, and may thereby limit the utilization of iron and growth of enteric bacteria such as E.coli. Does not prevent iron uptake by the bacterial siderophore aerobactin. In Capra hircus (Goat), this protein is Albumin.